Consider the following 89-residue polypeptide: Cell division topological specificity factor (89 aa).

This sequence belongs to the MinE family.

In terms of biological role, prevents the cell division inhibition by proteins MinC and MinD at internal division sites while permitting inhibition at polar sites. This ensures cell division at the proper site by restricting the formation of a division septum at the midpoint of the long axis of the cell. The polypeptide is Cell division topological specificity factor (Legionella pneumophila (strain Paris)).